The sequence spans 267 residues: MEMO1 family protein aq_890 (267 aa).

This sequence belongs to the MEMO1 family.

This chain is MEMO1 family protein aq_890, found in Aquifex aeolicus (strain VF5).